We begin with the raw amino-acid sequence, 2704 residues long: G surface protein, allelic form 168 (2704 aa).

The signal sequence occupies residues 1–20; sequence MNNKFIIFSLLLALVASQTY. PSA repeat units lie at residues 112-165, 172-231, 238-297, 304-360, 400-460, 468-523, 530-590, 596-667, 683-742, 747-806, 815-881, 929-994, 1003-1061, 1069-1123, 1141-1196, 1214-1269, 1287-1342, 1360-1415, 1433-1495, 1503-1566, 1576-1641, 1684-1740, 1750-1807, 1817-1887, 1893-1965, 1974-2033, 2070-2137, 2145-2204, 2209-2274, 2348-2419, and 2424-2489; these read TLDS…NTCD, ATDK…RICD, TTDD…KTCA, TTNS…KTCA, TTND…DKTC, TTHD…KKQC, TTTH…KACS, FTTT…KSCA, FTFS…KTCA, TSHA…ATCA, DSDT…YALS, LTFA…AAEC, LDHS…FANC, LTNT…ACLT, LTNA…ACLT, LTDA…ACLT, LTDA…DVTC, LDHA…ATDC, ITYE…ATTC, NHTN…KTCD, DDTE…DLNC, DTHN…KSCT, TTTH…KSCA, DDDT…KSCD, ATDA…IKNC, TSEA…KDCQ, TTHA…YTSC, YTTH…QSCA, and TTHA…LTCA.

Its subcellular location is the cell membrane. This protein is the surface antigen or immobilization antigen of Paramecium primaurelia. This chain is G surface protein, allelic form 168 (168G), found in Paramecium primaurelia.